The primary structure comprises 515 residues: MSSTKKPLVLTILDGYGHREEQQDNAILNAKTPVMDVLWQQQPHTLIAASGLDVGLPDGQMGNSEVGHVNLGAGRIVYQDLTRLDKEIKEGDFFTNPTLTAAVDNAVKTGKAVHIMGLLSAGGVHSHEDHIMAMVELAAKRGATAIYLHAFLDGRDTPPRSAESSLKRFTAKFAELGNGRIASIIGRYYAMDRDNRWDRVQLAYDLLTQAKGEFTADNAVAGLQAAYARGENDEFVKPTVIQATGEADAAMNEGDTLIFMNFRADRARQITRTFVNAEFDGFKRDKVVNFGDFIMLTEYAADIKVACAYPPASLTNTFGEWLMKHDKTQLRISETEKYAHVTFFYNGGVEEPFKGEDRILINSPKVATYDLQPEMSSAELTEKLVSAIGSGKYDVIICNYPNGDMVGHTGDYDAAVKAVETLDNCIEQVVAAVKAADGQLLITADHGNAEQMRDPATGQAHTAHTSLPVPLIYVGNKAVKAVEGGKLSDIAPTMLSLMEMEIPQEMTGKPLFIVE.

Residues D14 and S64 each contribute to the Mn(2+) site. The active-site Phosphoserine intermediate is the S64. Substrate contacts are provided by residues H125, 155–156 (RD), R187, R193, 263–266 (RADR), and K337. Residues D404, H408, D445, H446, and H464 each coordinate Mn(2+).

It belongs to the BPG-independent phosphoglycerate mutase family. In terms of assembly, monomer. It depends on Mn(2+) as a cofactor.

It catalyses the reaction (2R)-2-phosphoglycerate = (2R)-3-phosphoglycerate. The protein operates within carbohydrate degradation; glycolysis; pyruvate from D-glyceraldehyde 3-phosphate: step 3/5. Catalyzes the interconversion of 2-phosphoglycerate and 3-phosphoglycerate. The polypeptide is 2,3-bisphosphoglycerate-independent phosphoglycerate mutase (Yersinia pestis bv. Antiqua (strain Antiqua)).